We begin with the raw amino-acid sequence, 59 residues long: Large ribosomal subunit protein uL30 (59 aa).

It belongs to the universal ribosomal protein uL30 family. Part of the 50S ribosomal subunit.

This is Large ribosomal subunit protein uL30 from Psychrobacter cryohalolentis (strain ATCC BAA-1226 / DSM 17306 / VKM B-2378 / K5).